A 124-amino-acid polypeptide reads, in one-letter code: Acidic phospholipase A2 (124 aa).

7 disulfides stabilise this stretch: C26-C116, C28-C44, C43-C95, C49-C124, C50-C88, C57-C81, and C75-C86. 3 residues coordinate Ca(2+): Y27, G29, and G31. Residue H47 is part of the active site. D48 contacts Ca(2+). D89 is an active-site residue.

It belongs to the phospholipase A2 family. Group II subfamily. D49 sub-subfamily. Monomer. The cofactor is Ca(2+). In terms of tissue distribution, expressed by the venom gland.

It localises to the secreted. It catalyses the reaction a 1,2-diacyl-sn-glycero-3-phosphocholine + H2O = a 1-acyl-sn-glycero-3-phosphocholine + a fatty acid + H(+). Functionally, snake venom phospholipase A2 (PLA2) that acts in vivo as an anti-thrombotic agent. Inhibits platelet aggregation induced by ADP, arachidonic acid, and thrombin. PLA2 catalyzes the calcium-dependent hydrolysis of the 2-acyl groups in 3-sn-phosphoglycerides. This chain is Acidic phospholipase A2, found in Gloydius halys (Chinese water mocassin).